We begin with the raw amino-acid sequence, 398 residues long: Acetate kinase (398 aa).

Position 8 (asparagine 8) interacts with Mg(2+). Lysine 15 lines the ATP pocket. Arginine 89 contacts substrate. Aspartate 146 functions as the Proton donor/acceptor in the catalytic mechanism. Residues 206 to 210 (HIGNG), 283 to 285 (DMR), and 331 to 335 (GMGEN) each bind ATP. Position 383 (glutamate 383) interacts with Mg(2+).

Belongs to the acetokinase family. Homodimer. Mg(2+) serves as cofactor. It depends on Mn(2+) as a cofactor.

The protein localises to the cytoplasm. The enzyme catalyses acetate + ATP = acetyl phosphate + ADP. Its pathway is metabolic intermediate biosynthesis; acetyl-CoA biosynthesis; acetyl-CoA from acetate: step 1/2. Catalyzes the formation of acetyl phosphate from acetate and ATP. Can also catalyze the reverse reaction. The chain is Acetate kinase from Streptococcus pyogenes serotype M1.